The following is a 2431-amino-acid chain: Reducing polyketide synthase rads1 (2431 aa).

The 431-residue stretch at 10-440 (RAPIAIIGLA…GTNAHIVLER (431 aa)) folds into the Ketosynthase family 3 (KS3) domain. Residues Cys184, His319, and His363 each act as for beta-ketoacyl synthase activity in the active site. Residues 558 to 895 (FVFTGQGAQW…NLAAELFRRG (338 aa)) form a malonyl-CoA:ACP transacylase (MAT) domain region. Residues 944–1080 (KSILGAELPS…GLISIAYEDT (137 aa)) are N-terminal hotdog fold. Residues 944–1267 (KSILGAELPS…LAELEVDDAA (324 aa)) form the PKS/mFAS DH domain. Residues 946 to 1264 (ILGAELPSMD…DFRLAELEVD (319 aa)) are dehydratase (DH) domain. The active-site Proton acceptor; for dehydratase activity is the His976. The C-terminal hotdog fold stretch occupies residues 1108-1267 (PETCSKERFY…LAELEVDDAA (160 aa)). Asp1174 (proton donor; for dehydratase activity) is an active-site residue. The enoyl reductase (ER) domain stretch occupies residues 1705-2023 (GLLNTLHFVP…QGKHLGKMIL (319 aa)). Cys1822 serves as the catalytic Phosphocysteine intermediate. The ketoreductase (KR) domain stretch occupies residues 2048–2228 (ATYLIVGGLG…VSVNLGIMRD (181 aa)). The Carrier domain maps to 2346 to 2423 (VAAAIITEAL…TFAVQIAKKS (78 aa)). Ser2383 carries the post-translational modification O-(pantetheine 4'-phosphoryl)serine.

The protein operates within secondary metabolite biosynthesis. Its function is as follows. Reducing polyketide synthase; part of the gene cluster that mediates the biosynthesis of radicicol, a resorcylic acid lactone (RAL) that irreversibly inhibits the HSP90 molecular chaperone, an important target for cancer chemotherapy. The cluster encodes only two apparent post-PKS enzymes, a cytochrome P450 monooxygenase (radP) and a non-heme halogenase (radH) that introduce the epoxide and the chlorine, respectively. If this cluster includes all the genes required for radicicol biosynthesis, the remaining structural features of radicicol are presumably generated by the PKSs rads1 and rads2. The C-2' ketone could arise if the R-PKS rads1 and NR-PKS rads2 each carry out four iterations, in contrast to the five iteration-three iteration split for the hypothemycin PKSs. The origin of the cis 5',6' double bond is not known. The radicicol R-PKS radS1 ER domain may catalyze either double bond isomerization or reduction in the third iteration. The chain is Reducing polyketide synthase rads1 from Floropilus chiversii (Chaetomium chiversii).